Consider the following 494-residue polypeptide: NAD(P)H-quinone oxidoreductase subunit 2 B, chloroplastic (494 aa).

The next 13 membrane-spanning stretches (helical) occupy residues 6 to 26 (LLLF…GLIL), 39 to 59 (TPWF…VLLF), 81 to 101 (IFRF…VEYI), 106 to 126 (MAIT…MVLC), 131 to 151 (LVTI…LSGY), 166 to 186 (LLMG…LYGL), 211 to 231 (ILIA…LVPF), 277 to 297 (WHLL…LIAI), 305 to 325 (MLAY…IAGD), 336 to 356 (YMLF…LFGL), 377 to 397 (AFSL…AGFF), 413 to 433 (LLVS…LKII), and 468 to 488 (MIVC…IIAI).

Belongs to the complex I subunit 2 family. As to quaternary structure, NDH is composed of at least 16 different subunits, 5 of which are encoded in the nucleus.

It localises to the plastid. It is found in the chloroplast thylakoid membrane. It catalyses the reaction a plastoquinone + NADH + (n+1) H(+)(in) = a plastoquinol + NAD(+) + n H(+)(out). The catalysed reaction is a plastoquinone + NADPH + (n+1) H(+)(in) = a plastoquinol + NADP(+) + n H(+)(out). In terms of biological role, NDH shuttles electrons from NAD(P)H:plastoquinone, via FMN and iron-sulfur (Fe-S) centers, to quinones in the photosynthetic chain and possibly in a chloroplast respiratory chain. The immediate electron acceptor for the enzyme in this species is believed to be plastoquinone. Couples the redox reaction to proton translocation, and thus conserves the redox energy in a proton gradient. This chain is NAD(P)H-quinone oxidoreductase subunit 2 B, chloroplastic, found in Cycas taitungensis (Prince sago).